An 817-amino-acid chain; its full sequence is Leucine--tRNA ligase (817 aa).

Positions 51–61 match the 'HIGH' region motif; it reads PYPSGDLHVGH. The short motif at 588 to 592 is the 'KMSKS' region element; the sequence is RMSKS. Residue Lys-591 participates in ATP binding.

The protein belongs to the class-I aminoacyl-tRNA synthetase family.

It localises to the cytoplasm. The catalysed reaction is tRNA(Leu) + L-leucine + ATP = L-leucyl-tRNA(Leu) + AMP + diphosphate. The sequence is that of Leucine--tRNA ligase from Rubrobacter xylanophilus (strain DSM 9941 / JCM 11954 / NBRC 16129 / PRD-1).